Here is a 425-residue protein sequence, read N- to C-terminus: MNIISVGVNHKTAPIEIRERISLSEVQNKEFITDLISSGLAHEAMVISTCNRTELYVVPAMHEVTGEYLKEYLIAYKDARKEVRPEHFFSRFYCGTARHLFEVSSAIDSLILGEGQILGQVKDAYRISAEVQAAGILLTRLCHTAFSVAKKVKTKTKIMEGAVSVSYAAVELAQKIFSNLSMKKILLIGAGETGELAAKHMFQKNARNIVITNRTLSKAEALAEELGTKKVLPFESYKDYLHEFDIIITAVSTKEYVLSEAEMHQTMMKRRLKPVIILDLGLPRNVDPDIAKLQNMFLKDIDALKHIIDKNLERRSAELPKVNAIIEEELIAFGQWINTLKVRPTIVDLQSKFIEIKEKELERYRYKVSEDELARMEHLTDRILKKILHHPIKMLKAPIDTANNIPSRVNLVRNVFDLEEPNQQH.

Substrate-binding positions include threonine 49 to arginine 52, serine 109, glutamate 114 to glutamine 116, and glutamine 120. Cysteine 50 functions as the Nucleophile in the catalytic mechanism. Glycine 189–glycine 194 serves as a coordination point for NADP(+).

Belongs to the glutamyl-tRNA reductase family. As to quaternary structure, homodimer.

It carries out the reaction (S)-4-amino-5-oxopentanoate + tRNA(Glu) + NADP(+) = L-glutamyl-tRNA(Glu) + NADPH + H(+). It participates in porphyrin-containing compound metabolism; protoporphyrin-IX biosynthesis; 5-aminolevulinate from L-glutamyl-tRNA(Glu): step 1/2. It functions in the pathway porphyrin-containing compound metabolism; chlorophyll biosynthesis. Catalyzes the NADPH-dependent reduction of glutamyl-tRNA(Glu) to glutamate 1-semialdehyde (GSA). In Chlorobium phaeobacteroides (strain DSM 266 / SMG 266 / 2430), this protein is Glutamyl-tRNA reductase.